Here is a 422-residue protein sequence, read N- to C-terminus: Phagosome assembly factor 1 (422 aa).

It belongs to the PHAF1 family. In terms of assembly, interacts with BCAS3; the interaction is requrired for the association with the phagophore.

It is found in the cytoplasm. The protein localises to the preautophagosomal structure. Functionally, plays a regulatory role in autophagic activity. In complex with BCAS3, associates with the autophagosome formation site during both non-selective and selective autophagy. In Homo sapiens (Human), this protein is Phagosome assembly factor 1.